The chain runs to 195 residues: uncharacterized protein (195 aa).

The segment at 143 to 195 (NKLIETINTNRTNNTDNKSTKSKKQTETKKSLRTNKIVKQPINKSKKNIREEY) is disordered. A compositionally biased stretch (low complexity) spans 148-159 (TINTNRTNNTDN).

This is an uncharacterized protein from Acanthamoeba polyphaga (Amoeba).